The following is a 650-amino-acid chain: Fructose-1,6-bisphosphatase class 3 (650 aa).

Belongs to the FBPase class 3 family. Mn(2+) is required as a cofactor.

The enzyme catalyses beta-D-fructose 1,6-bisphosphate + H2O = beta-D-fructose 6-phosphate + phosphate. Its pathway is carbohydrate biosynthesis; gluconeogenesis. This chain is Fructose-1,6-bisphosphatase class 3, found in Finegoldia magna (strain ATCC 29328 / DSM 20472 / WAL 2508) (Peptostreptococcus magnus).